A 1485-amino-acid polypeptide reads, in one-letter code: Glutamate receptor ionotropic, NMDA 2B (1485 aa).

Residues 1-26 (MKPRAECCSPKFWLVLAVLAVSGSRA) form the signal peptide. The Extracellular segment spans residues 27-557 (RSQKSPPSIG…SAFLEPFSAD (531 aa)). Asparagine 74 carries an N-linked (GlcNAc...) asparagine glycan. Cysteines 86 and 321 form a disulfide. 2 residues coordinate Zn(2+): histidine 127 and glutamate 284. N-linked (GlcNAc...) asparagine glycosylation is found at asparagine 341, asparagine 348, asparagine 444, and asparagine 491. Intrachain disulfides connect cysteine 429-cysteine 456 and cysteine 436-cysteine 457. Positions 514 and 519 each coordinate L-glutamate. Asparagine 542 is a glycosylation site (N-linked (GlcNAc...) asparagine). Residues 558–576 (VWVMMFVMLLIVSAVAVFV) traverse the membrane as a helical segment. At 577–603 (FEYFSPVGYNRCLADGREPGGPSFTIG) the chain is on the cytoplasmic side. Residues 604–623 (KAIWLLWGLVFNNSVPVQNP) constitute an intramembrane region (discontinuously helical). The interval 604–623 (KAIWLLWGLVFNNSVPVQNP) is pore-forming. Residues 624-630 (KGTTSKI) are Cytoplasmic-facing. A helical transmembrane segment spans residues 631 to 646 (MVSVWAFFAVIFLASY). At 647–817 (TANLAAFMIQ…VMSSQLDIDN (171 aa)) the chain is on the extracellular side. A glycan (N-linked (GlcNAc...) asparagine) is linked at asparagine 688. L-glutamate is bound by residues 690 to 691 (ST) and aspartate 732. Cysteines 746 and 801 form a disulfide. The helical transmembrane segment at 818-837 (MAGVFYMLGAAMALSLITFI) threads the bilayer. The Cytoplasmic segment spans residues 838–1485 (CEHLFYWQFR…EKLSSIESDV (648 aa)). Serine 882, serine 886, serine 917, and serine 920 each carry phosphoserine. Tyrosine 962 and tyrosine 1039 each carry phosphotyrosine. Residues serine 1058, serine 1061, and serine 1064 each carry the phosphoserine modification. The segment at 1074 to 1097 (EGNAAKRRKQQYKDSLKKRPASAK) is disordered. Phosphotyrosine is present on residues tyrosine 1109 and tyrosine 1133. Serine 1143 is modified (phosphoserine). Tyrosine 1155 is modified (phosphotyrosine). The tract at residues 1162-1194 (FKRDSVSGGGPCTNRSHLKHGAGDKHGVVSGVP) is disordered. 2 positions are modified to phosphoserine: serine 1255 and serine 1259. Residues 1269–1278 (PVAVPSNAPS) are compositionally biased toward low complexity. The disordered stretch occupies residues 1269 to 1302 (PVAVPSNAPSTKYPQSPTNSKAQKKTRNKLRRQH). Residues 1280–1289 (KYPQSPTNSK) show a composition bias toward polar residues. The segment covering 1290–1301 (AQKKTRNKLRRQ) has biased composition (basic residues). An interaction with DAPK1 region spans residues 1292 to 1304 (KKTRNKLRRQHSY). Serine 1303 is modified (phosphoserine; by DAPK1). A Phosphotyrosine modification is found at tyrosine 1475. The PDZ-binding motif lies at 1483–1485 (SDV).

This sequence belongs to the glutamate-gated ion channel (TC 1.A.10.1) family. NR2B/GRIN2B subfamily. Heterotetramer. Forms heterotetrameric channels composed of two GluN1/zeta subunits (GRIN1), and two identical GluN2/epsilon subunits (GRIN2A, GRIN2B, GRIN2C or GRIN2D) or GluN3 subunits (GRIN3A or GRIN3B) (in vitro). Can also form heterotetrameric channels that contain at least two GluN1 subunits and at least two different GluN2 subunits (or a combination of one GluN2 and one GluN3 subunits) (in vitro). In vivo, the subunit composition may depend on the expression levels of the different subunits. Found in a complex with GRIN1, GRIN3A and PPP2CB. Found in a complex with GRIN1 and GRIN3B. Interacts with MAGI3. Interacts with HIP1 and Neto1. Interacts with PDZ domains of PATJ, DLG3 and DLG4. Interacts with DAPK1. Found in a complex with GRIN1 and PRR7. Interacts with PRR7. Interacts with CAMK2A. Interacts with ARC; preventing ARC oligomerization. Interacts with TMEM25. Interacts (via the extreme C-terminus) with FRMPD2 (via the second PDZ domain); the interaction is direct and is likely to promote NMDAR-mediated neural signal transmission. Interacts with FAM81A; the interaction facilitates condensate formation via liquid-liquid phase separation. Phosphorylated on tyrosine residues. Phosphorylation at Ser-1303 by DAPK1 enhances synaptic NMDA receptor channel activity.

It is found in the cell membrane. The protein localises to the postsynaptic cell membrane. Its subcellular location is the cell projection. It localises to the dendrite. The protein resides in the late endosome. It is found in the lysosome. The protein localises to the cytoplasm. Its subcellular location is the cytoskeleton. The enzyme catalyses Ca(2+)(in) = Ca(2+)(out). The catalysed reaction is Na(+)(in) = Na(+)(out). It catalyses the reaction K(+)(in) = K(+)(out). Component of N-methyl-D-aspartate (NMDA) receptors (NMDARs) that function as heterotetrameric, ligand-gated cation channels with high calcium permeability and voltage-dependent block by Mg(2+). Participates in synaptic plasticity for learning and memory formation by contributing to the long-term depression (LTD) of hippocampus membrane currents. Channel activation requires binding of the neurotransmitter L-glutamate to the GluN2 subunit, glycine or D-serine binding to the GluN1 subunit, plus membrane depolarization to eliminate channel inhibition by Mg(2+). NMDARs mediate simultaneously the potasium efflux and the influx of calcium and sodium. Each GluN2 subunit confers differential attributes to channel properties, including activation, deactivation and desensitization kinetics, pH sensitivity, Ca2(+) permeability, and binding to allosteric modulators. In concert with DAPK1 at extrasynaptic sites, acts as a central mediator for stroke damage. Its phosphorylation at Ser-1303 by DAPK1 enhances synaptic NMDA receptor channel activity inducing injurious Ca2+ influx through them, resulting in an irreversible neuronal death. The sequence is that of Glutamate receptor ionotropic, NMDA 2B from Canis lupus familiaris (Dog).